The following is a 295-amino-acid chain: Small ribosomal subunit protein uS2 (295 aa).

The tract at residues 261–295 (QAKKFSKTKNIDEETNTEFEQVLNDADENKNSDNA) is disordered.

This sequence belongs to the universal ribosomal protein uS2 family.

The protein is Small ribosomal subunit protein uS2 of Rickettsia rickettsii (strain Sheila Smith).